A 932-amino-acid polypeptide reads, in one-letter code: UPF0182 protein Amet_0022 (932 aa).

The next 7 helical transmembrane spans lie at 14 to 34 (VIIGLGIFIFIFLFGFLSEIL), 60 to 80 (LQIGIPLFIVGTILYYLYLIG), 104 to 124 (ILILPAFVFGLMTSTSVAGSL), 166 to 186 (TSILFLMVIITVIFYVIMFLI), 208 to 228 (LLQIALKQFAALGVIFFLVLA), 256 to 276 (VTLWVYRAQILASLLSATGVV), and 286 to 306 (LLLIAPISIIAVGILGNVISL).

Belongs to the UPF0182 family.

The protein resides in the cell membrane. The protein is UPF0182 protein Amet_0022 of Alkaliphilus metalliredigens (strain QYMF).